The sequence spans 464 residues: Citrate synthase, mitochondrial (464 aa).

The transit peptide at 1 to 27 (MALLTAAARLFGAKNASCLVLAARHAS) directs the protein to the mitochondrion. Positions 2-21 (ALLTAAARLFGAKNASCLVL) match the SIFI-degron motif. Lysine 76 bears the N6-acetyllysine; alternate mark. Lysine 76 carries the N6-succinyllysine; alternate modification. An N6-succinyllysine mark is found at lysine 103 and lysine 193. Serine 226 carries the post-translational modification Phosphoserine. Histidine 301 is an active-site residue. Lysine 321 and lysine 327 each carry N6-acetyllysine; alternate. 2 positions are modified to N6-succinyllysine; alternate: lysine 321 and lysine 327. Histidine 347 is a catalytic residue. Arginine 356 serves as a coordination point for oxaloacetate. The residue at position 375 (lysine 375) is an N6-acetyllysine; alternate. The residue at position 375 (lysine 375) is an N6-succinyllysine; alternate. Position 382 is an N6-acetyllysine (lysine 382). An N6-acetyllysine; alternate modification is found at lysine 393. Lysine 393 bears the N6-succinyllysine; alternate mark. Lysine 395 is modified (N6,N6,N6-trimethyllysine). Aspartate 402 is an active-site residue. 2 residues coordinate oxaloacetate: arginine 428 and arginine 448. Lysine 450 carries the N6-succinyllysine modification. Lysine 459 bears the N6-acetyllysine; alternate mark. Lysine 459 bears the N6-succinyllysine; alternate mark.

It belongs to the citrate synthase family. In terms of assembly, homodimer. Methylated. Trimethylation at Lys-395 by CSKMT decreases citrate synthase activity. In terms of processing, in response to mitochondrial stress, the precursor protein is ubiquitinated by the SIFI complex in the cytoplasm before mitochondrial import, leading to its degradation. Within the SIFI complex, UBR4 initiates ubiquitin chain that are further elongated or branched by KCMF1.

It localises to the mitochondrion matrix. It carries out the reaction oxaloacetate + acetyl-CoA + H2O = citrate + CoA + H(+). It participates in carbohydrate metabolism; tricarboxylic acid cycle; isocitrate from oxaloacetate: step 1/2. Functionally, key enzyme of the Krebs tricarboxylic acid cycle which catalyzes the synthesis of citrate from acetyl coenzyme A and oxaloacetate. In Sus scrofa (Pig), this protein is Citrate synthase, mitochondrial (CS).